We begin with the raw amino-acid sequence, 145 residues long: Large ribosomal subunit protein uL11 (145 aa).

Belongs to the universal ribosomal protein uL11 family. As to quaternary structure, part of the ribosomal stalk of the 50S ribosomal subunit. Interacts with L10 and the large rRNA to form the base of the stalk. L10 forms an elongated spine to which L12 dimers bind in a sequential fashion forming a multimeric L10(L12)X complex. In terms of processing, one or more lysine residues are methylated.

Forms part of the ribosomal stalk which helps the ribosome interact with GTP-bound translation factors. This Corynebacterium glutamicum (strain ATCC 13032 / DSM 20300 / JCM 1318 / BCRC 11384 / CCUG 27702 / LMG 3730 / NBRC 12168 / NCIMB 10025 / NRRL B-2784 / 534) protein is Large ribosomal subunit protein uL11.